A 774-amino-acid chain; its full sequence is Formin-like protein 13 (774 aa).

A signal peptide spans 1-22 (MRRRVALSTAIALLVGAQLCVA). Pro residues predominate over residues 51–67 (PPPPMSGSEAVPPPPPA). The tract at residues 51 to 78 (PPPPMSGSEAVPPPPPAAAASATTGGGR) is disordered. Residues 68-78 (AAASATTGGGR) are compositionally biased toward low complexity. Residues 89 to 109 (IALSAGLVALAVASYSCCLLL) form a helical membrane-spanning segment. Disordered stretches follow at residues 130 to 163 (AAAA…DAIY), 176 to 338 (HEKS…HLKP), 374 to 402 (FLNS…RRLL), and 740 to 774 (GSGK…SSSS). Residues 194–216 (DLRPLPPLKRPESQPPPPPPSTP) show a composition bias toward pro residues. The span at 242 to 261 (SSFSRSTSQHSTLEQTAMPP) shows a compositional bias: low complexity. Pro residues predominate over residues 262–286 (MAAPAPPQTNPPRPVRPPPPPPPPR). Residues 326-749 (GAARPPKPPH…GSGKSFRVPA (424 aa)) enclose the FH2 domain.

This sequence belongs to the formin-like family. Class-I subfamily.

It localises to the membrane. In Oryza sativa subsp. japonica (Rice), this protein is Formin-like protein 13 (FH13).